A 689-amino-acid polypeptide reads, in one-letter code: Glycine--tRNA ligase beta subunit (689 aa).

The protein belongs to the class-II aminoacyl-tRNA synthetase family. As to quaternary structure, tetramer of two alpha and two beta subunits.

The protein localises to the cytoplasm. It catalyses the reaction tRNA(Gly) + glycine + ATP = glycyl-tRNA(Gly) + AMP + diphosphate. The chain is Glycine--tRNA ligase beta subunit from Escherichia coli O8 (strain IAI1).